Here is an 895-residue protein sequence, read N- to C-terminus: Androgen receptor (895 aa).

The tract at residues 1–533 (MEVQLGLGRV…PIDYYFPPQK (533 aa)) is modulating. The tract at residues 1 to 562 (MEVQLGLGRV…GSCKVFFKRA (562 aa)) is interaction with ZNF318. 2 disordered regions span residues 33–150 (VIQN…LSLL) and 178–211 (QQQQ…YLEG). Low complexity-rich tracts occupy residues 44 to 81 (AASA…GSPQ) and 178 to 200 (QQQQ…ASGA). Ser-65 is subject to Phosphoserine; by CDK9. Ser-79 carries the post-translational modification Phosphoserine. The span at 201–211 (PTSSKDNYLEG) shows a compositional bias: polar residues. Residue Tyr-208 is modified to Phosphotyrosine; by CSK. Ser-241 is subject to Phosphoserine. Residue Tyr-252 is modified to Phosphotyrosine; by CSK and TNK2. Phosphotyrosine; by CSK occurs at positions 292, 331, 342, and 347. The residue at position 348 (Tyr-348) is a Phosphotyrosine; by CSK and TNK2. Lys-371 is covalently cross-linked (Glycyl lysine isopeptide (Lys-Gly) (interchain with G-Cter in SUMO)). A Phosphotyrosine; by CSK modification is found at Tyr-378. Lys-496 participates in a covalent cross-link: Glycyl lysine isopeptide (Lys-Gly) (interchain with G-Cter in SUMO). Phosphotyrosine; by CSK is present on residues Tyr-510 and Tyr-527. An interaction with LPXN region spans residues 527–894 (YYFPPQKTCL…GKVKPIYFHT (368 aa)). Positions 534–607 (TCLICGDEAS…AGMTLGARKL (74 aa)) form a DNA-binding region, nuclear receptor. NR C4-type zinc fingers lie at residues 535–555 (CLIC…CGSC) and 571–595 (CASR…LRKC). Residues 547-637 (YGALTCGSCK…TEETAQKLTV (91 aa)) are interaction with HIPK3. Positions 567–894 (QKYLCASRND…GKVKPIYFHT (328 aa)) are interaction with CCAR1. Residues 600–894 (MTLGARKLKK…GKVKPIYFHT (295 aa)) form an interaction with KAT7 region. The residue at position 626 (Ser-626) is a Phosphoserine; by STK4/MST1. Residues 644 to 875 (ECQPIFLNVL…DFPEMMAEII (232 aa)) form the NR LBD domain. 17beta-hydroxy-5alpha-androstan-3-one-binding residues include Asn-681 and Arg-728. Glycyl lysine isopeptide (Lys-Gly) (interchain with G-Cter in ubiquitin) cross-links involve residues Lys-821 and Lys-823. Position 853 (Thr-853) interacts with 17beta-hydroxy-5alpha-androstan-3-one. A Phosphotyrosine; by CSK modification is found at Tyr-891.

The protein belongs to the nuclear hormone receptor family. NR3 subfamily. Binds DNA as a homodimer. Part of a ternary complex containing AR, EFCAB6/DJBP and PARK7. Interacts with HIPK3 and NR0B2 in the presence of androgen. The ligand binding domain interacts with KAT7/HBO1 in the presence of dihydrotestosterone. Interacts with EFCAB6/DJBP, PQBP1, RANBP9, RBAK, SPDEF, SRA1, TGFB1I1 and RREB1. Interacts with ZMIZ1/ZIMP10 and ZMIZ2/ZMIP7 which both enhance its transactivation activity. Interacts with SLC30A9 and RAD54L2/ARIP4. Interacts with MACROD1 (via macro domain). Interacts via the ligand-binding domain with LXXLL and FXXLF motifs from NCOA1, NCOA2, NCOA3 and MAGEA11. Interacts (via nuclear receptor DNA binding domain and nuclear receptor ligand binding domain) with NCOA4. The AR N-terminal poly-Gln region binds Ran resulting in enhancement of AR-mediated transactivation. Ran-binding decreases as the poly-Gln length increases. Interacts with HIP1 (via coiled coil domain). Interacts (via ligand-binding domain) with TRIM68. Interacts with TNK2. Interacts with USP26. Interacts with RNF6. Interacts (regulated by RNF6 probably through polyubiquitination) with RNF14; regulates AR transcriptional activity. Interacts with PRMT2 and TRIM24. Interacts with RACK1. Interacts with RANBP10; this interaction enhances dihydrotestosterone-induced AR transcriptional activity. Interacts with PRPF6 in a hormone-independent way; this interaction enhances dihydrotestosterone-induced AR transcriptional activity. Interacts with STK4/MST1. Interacts with ZIPK/DAPK3. Interacts with LPXN. Interacts with MAK. Part of a complex containing AR, MAK and NCOA3. Interacts with CRY1. Interacts with CCAR1 and GATA2. Interacts with ZNF318. Interacts with BUD31. Interacts with ARID4A. Interacts with ARID4B. Interacts (via NR LBD domain) with ZBTB7A; the interaction is direct and androgen-dependent. Interacts with NCOR1. Interacts with NCOR2. Interacts with CRY2 in a ligand-dependent manner. Post-translationally, phosphorylated in prostate cancer cells in response to several growth factors including EGF. Phosphorylation is induced by c-Src kinase (CSK). Tyr-510 is one of the major phosphorylation sites and an increase in phosphorylation and Src kinase activity is associated with prostate cancer progression. Phosphorylation by TNK2 enhances the DNA-binding and transcriptional activity. Phosphorylation at Ser-65 by CDK9 regulates AR promoter selectivity and cell growth. In terms of processing, sumoylated on Lys-371 (major) and Lys-496. Ubiquitinated. Deubiquitinated by USP26. 'Lys-6' and 'Lys-27'-linked polyubiquitination by RNF6 modulates AR transcriptional activity and specificity. Palmitoylated by ZDHHC7 and ZDHHC21. Palmitoylation is required for plasma membrane targeting and for rapid intracellular signaling via ERK and AKT kinases and cAMP generation.

The protein resides in the nucleus. It localises to the cytoplasm. Steroid hormone receptors are ligand-activated transcription factors that regulate eukaryotic gene expression and affect cellular proliferation and differentiation in target tissues. Transcription factor activity is modulated by bound coactivator and corepressor proteins like ZBTB7A that recruits NCOR1 and NCOR2 to the androgen response elements/ARE on target genes, negatively regulating androgen receptor signaling and androgen-induced cell proliferation. Transcription activation is also down-regulated by NR0B2. Activated, but not phosphorylated, by HIPK3 and ZIPK/DAPK3. This chain is Androgen receptor (AR), found in Macaca mulatta (Rhesus macaque).